The sequence spans 423 residues: Alpha-1-antichymotrypsin (423 aa).

Positions 1–23 are cleaved as a signal peptide; the sequence is MERMLPFLALGLLVAGFCPAVLC. Asn-93, Asn-106, Asn-127, Asn-186, and Asn-271 each carry an N-linked (GlcNAc...) asparagine glycan. Positions 369 to 394 are RCL; it reads GTEASAATAVKITLLSALVDPMTIVR.

The protein belongs to the serpin family. Interacts with DNAJC1. As to expression, plasma.

It is found in the secreted. In terms of biological role, although its physiological function is unclear, it can inhibit neutrophil cathepsin G and mast cell chymase, both of which can convert angiotensin-1 to the active angiotensin-2. This is Alpha-1-antichymotrypsin (SERPINA3) from Pongo abelii (Sumatran orangutan).